Here is a 1412-residue protein sequence, read N- to C-terminus: DNA-directed RNA polymerase subunit beta' (1412 aa).

4 residues coordinate Zn(2+): cysteine 70, cysteine 72, cysteine 85, and cysteine 88. Aspartate 460, aspartate 462, and aspartate 464 together coordinate Mg(2+). 4 residues coordinate Zn(2+): cysteine 819, cysteine 893, cysteine 900, and cysteine 903. Residues 1391–1412 (AEESFEFGTPETPAAEQQHSGE) form a disordered region.

Belongs to the RNA polymerase beta' chain family. In terms of assembly, the RNAP catalytic core consists of 2 alpha, 1 beta, 1 beta' and 1 omega subunit. When a sigma factor is associated with the core the holoenzyme is formed, which can initiate transcription. The cofactor is Mg(2+). Requires Zn(2+) as cofactor.

The enzyme catalyses RNA(n) + a ribonucleoside 5'-triphosphate = RNA(n+1) + diphosphate. Its function is as follows. DNA-dependent RNA polymerase catalyzes the transcription of DNA into RNA using the four ribonucleoside triphosphates as substrates. The chain is DNA-directed RNA polymerase subunit beta' from Paraburkholderia xenovorans (strain LB400).